The chain runs to 98 residues: DNA-binding protein Fis (98 aa).

Residues 74–93 (QTRAAVMMGINRGTLRKKLK) constitute a DNA-binding region (H-T-H motif).

The protein belongs to the transcriptional regulatory Fis family. In terms of assembly, homodimer.

Activates ribosomal RNA transcription. Plays a direct role in upstream activation of rRNA promoters. This chain is DNA-binding protein Fis, found in Aeromonas hydrophila subsp. hydrophila (strain ATCC 7966 / DSM 30187 / BCRC 13018 / CCUG 14551 / JCM 1027 / KCTC 2358 / NCIMB 9240 / NCTC 8049).